The chain runs to 148 residues: Large ribosomal subunit protein uL15 (148 aa).

The tract at residues 12 to 52 (ERKNRKRVGRGGGSGWGGTSGKGHKGQNARSGGGVPAWFEG) is disordered. Over residues 21-32 (RGGGSGWGGTSG) the composition is skewed to gly residues.

Belongs to the universal ribosomal protein uL15 family. As to quaternary structure, part of the 50S ribosomal subunit.

Functionally, binds to the 23S rRNA. The chain is Large ribosomal subunit protein uL15 from Maridesulfovibrio salexigens (strain ATCC 14822 / DSM 2638 / NCIMB 8403 / VKM B-1763) (Desulfovibrio salexigens).